The chain runs to 445 residues: UPF0210 protein SEQ_0468 (445 aa).

The protein belongs to the UPF0210 family. In terms of assembly, homodimer.

The polypeptide is UPF0210 protein SEQ_0468 (Streptococcus equi subsp. equi (strain 4047)).